An 894-amino-acid chain; its full sequence is Alanine--tRNA ligase (894 aa).

Zn(2+)-binding residues include His-587, His-591, Cys-691, and His-695. The segment at 739–758 is disordered; the sequence is AEGDRAAEEAKGRLQEERDA.

The protein belongs to the class-II aminoacyl-tRNA synthetase family. Zn(2+) serves as cofactor.

It is found in the cytoplasm. It catalyses the reaction tRNA(Ala) + L-alanine + ATP = L-alanyl-tRNA(Ala) + AMP + diphosphate. Catalyzes the attachment of alanine to tRNA(Ala) in a two-step reaction: alanine is first activated by ATP to form Ala-AMP and then transferred to the acceptor end of tRNA(Ala). Also edits incorrectly charged Ser-tRNA(Ala) and Gly-tRNA(Ala) via its editing domain. The protein is Alanine--tRNA ligase of Cenarchaeum symbiosum (strain A).